A 460-amino-acid polypeptide reads, in one-letter code: Trigger factor (460 aa).

The PPIase FKBP-type domain maps to 166–245; the sequence is DDFLTIDITA…VKAVKERELP (80 aa). The interval 434-460 is disordered; the sequence is AAEEAAAGEANEEADVVASDDPAAVKF. Positions 449–460 are enriched in low complexity; the sequence is VVASDDPAAVKF.

This sequence belongs to the FKBP-type PPIase family. Tig subfamily.

The protein localises to the cytoplasm. The enzyme catalyses [protein]-peptidylproline (omega=180) = [protein]-peptidylproline (omega=0). Functionally, involved in protein export. Acts as a chaperone by maintaining the newly synthesized protein in an open conformation. Functions as a peptidyl-prolyl cis-trans isomerase. The protein is Trigger factor of Paenarthrobacter aurescens (strain TC1).